The chain runs to 172 residues: Large ribosomal subunit protein uL10 (172 aa).

The protein belongs to the universal ribosomal protein uL10 family. In terms of assembly, part of the ribosomal stalk of the 50S ribosomal subunit. The N-terminus interacts with L11 and the large rRNA to form the base of the stalk. The C-terminus forms an elongated spine to which L12 dimers bind in a sequential fashion forming a multimeric L10(L12)X complex.

Forms part of the ribosomal stalk, playing a central role in the interaction of the ribosome with GTP-bound translation factors. In Rhodopseudomonas palustris (strain BisA53), this protein is Large ribosomal subunit protein uL10.